The following is a 134-amino-acid chain: Global transcriptional regulator Spx (134 aa).

The cysteines at positions 10 and 13 are disulfide-linked.

Belongs to the ArsC family. Spx subfamily. As to quaternary structure, interacts with the C-terminal domain of the alpha subunit of the RNAP.

Its subcellular location is the cytoplasm. Global transcriptional regulator that plays a key role in stress response and exerts either positive or negative regulation of genes. Acts by interacting with the C-terminal domain of the alpha subunit of the RNA polymerase (RNAP). This interaction can enhance binding of RNAP to the promoter region of target genes and stimulate their transcription, or block interaction of RNAP with activator. This chain is Global transcriptional regulator Spx, found in Streptococcus pyogenes serotype M1.